A 90-amino-acid polypeptide reads, in one-letter code: Protein PRAC2 (90 aa).

In terms of tissue distribution, highly expressed in prostate and testis. Also detected in placenta, muscle, colon, peripheral blood leukocytes and skin.

It is found in the nucleus. The protein is Protein PRAC2 of Homo sapiens (Human).